Reading from the N-terminus, the 84-residue chain is UPF0320 protein YNR077C (84 aa).

This sequence belongs to the UPF0320 family.

The protein is UPF0320 protein YNR077C of Saccharomyces cerevisiae (strain ATCC 204508 / S288c) (Baker's yeast).